We begin with the raw amino-acid sequence, 559 residues long: 2,3-bisphosphoglycerate-independent phosphoglycerate mutase (559 aa).

The Mn(2+) site is built by aspartate 28 and serine 81. The active-site Phosphoserine intermediate is serine 81. Residues histidine 140, 170–171 (RD), arginine 206, arginine 213, 286–289 (RADR), and lysine 361 contribute to the substrate site. Aspartate 430, histidine 434, aspartate 471, histidine 472, and histidine 501 together coordinate Mn(2+).

This sequence belongs to the BPG-independent phosphoglycerate mutase family. Monomer. The cofactor is Mn(2+).

The protein resides in the cytoplasm. The enzyme catalyses (2R)-2-phosphoglycerate = (2R)-3-phosphoglycerate. Its pathway is carbohydrate degradation; glycolysis; pyruvate from D-glyceraldehyde 3-phosphate: step 3/5. In terms of biological role, catalyzes the interconversion of 2-phosphoglycerate and 3-phosphoglycerate. This is 2,3-bisphosphoglycerate-independent phosphoglycerate mutase (PGM1) from Mesembryanthemum crystallinum (Common ice plant).